The primary structure comprises 995 residues: Epididymis-specific alpha-mannosidase (995 aa).

A signal peptide spans 1–21 (MGPHSWLPLFMQLALLGPQWA). Zn(2+) is bound by residues histidine 36, aspartate 38, and aspartate 151. Aspartate 151 serves as the catalytic Nucleophile. Residue asparagine 285 is glycosylated (N-linked (GlcNAc...) asparagine). A Zn(2+)-binding site is contributed by histidine 411. Asparagine 593, asparagine 625, asparagine 657, asparagine 733, asparagine 793, asparagine 875, and asparagine 977 each carry an N-linked (GlcNAc...) asparagine glycan. The tract at residues 956–977 (TEDGHHHRGSSRRPLPPLRGPN) is disordered.

This sequence belongs to the glycosyl hydrolase 38 family. The cofactor is Zn(2+). In terms of processing, processed into a 27 kDa fragment localized on the equatorial segment and the apical rim of the head of mature sperm. Specific to the caput and corpus of the epididymis.

The protein localises to the secreted. The enzyme catalyses Hydrolysis of terminal, non-reducing alpha-D-mannose residues in alpha-D-mannosides.. Its function is as follows. Can digest both p-nitro-phenyl-alpha-D-mannoside and high mannose oligosaccharide (Man(8)-GlcNAc(2)). May be involved in sperm maturation. Has a possible role in specific sperm-egg interaction since sperm surface mannosidase acts like a receptor for mannose-containing oligosaccharides located on the zona pellucida. This is Epididymis-specific alpha-mannosidase (MAN2B2) from Sus scrofa (Pig).